The sequence spans 427 residues: L-threonine dehydratase biosynthetic IlvA (427 aa).

Lys-63 carries the N6-(pyridoxal phosphate)lysine modification. Residues Asn-90, 193-197 (GGGGC), and Ser-319 contribute to the pyridoxal 5'-phosphate site. An ACT-like domain is found at 343 to 417 (HYFLVDFPQK…TEMHVETLQP (75 aa)).

This sequence belongs to the serine/threonine dehydratase family. In terms of assembly, homotetramer. It depends on pyridoxal 5'-phosphate as a cofactor.

The catalysed reaction is L-threonine = 2-oxobutanoate + NH4(+). It functions in the pathway amino-acid biosynthesis; L-isoleucine biosynthesis; 2-oxobutanoate from L-threonine: step 1/1. Its function is as follows. Catalyzes the anaerobic formation of alpha-ketobutyrate and ammonia from threonine in a two-step reaction. The first step involved a dehydration of threonine and a production of enamine intermediates (aminocrotonate), which tautomerizes to its imine form (iminobutyrate). Both intermediates are unstable and short-lived. The second step is the nonenzymatic hydrolysis of the enamine/imine intermediates to form 2-ketobutyrate and free ammonia. In the low water environment of the cell, the second step is accelerated by RidA. This is L-threonine dehydratase biosynthetic IlvA (ilvA) from Mycobacterium leprae (strain TN).